A 454-amino-acid chain; its full sequence is Chromosomal replication initiator protein DnaA (454 aa).

Positions 1-80 (MNLSNLWQSC…NPELRISLKE (80 aa)) are domain I, interacts with DnaA modulators. Residues 80-117 (EGVKPAPKIVESTPNTSLRSESAVDFQAESSASVKFES) form a domain II region. The interval 118 to 335 (HLNTKHLFDN…GALNRVKAMQ (218 aa)) is domain III, AAA+ region. 4 residues coordinate ATP: Gly163, Gly165, Lys166, and Thr167. Residues 336-454 (DFKGGDIDID…WANLIRTLSA (119 aa)) are domain IV, binds dsDNA.

It belongs to the DnaA family. In terms of assembly, oligomerizes as a right-handed, spiral filament on DNA at oriC.

The protein localises to the cytoplasm. Functionally, plays an essential role in the initiation and regulation of chromosomal replication. ATP-DnaA binds to the origin of replication (oriC) to initiate formation of the DNA replication initiation complex once per cell cycle. Binds the DnaA box (a 9 base pair repeat at the origin) and separates the double-stranded (ds)DNA. Forms a right-handed helical filament on oriC DNA; dsDNA binds to the exterior of the filament while single-stranded (ss)DNA is stabiized in the filament's interior. The ATP-DnaA-oriC complex binds and stabilizes one strand of the AT-rich DNA unwinding element (DUE), permitting loading of DNA polymerase. After initiation quickly degrades to an ADP-DnaA complex that is not apt for DNA replication. Binds acidic phospholipids. This Haemophilus influenzae (strain ATCC 51907 / DSM 11121 / KW20 / Rd) protein is Chromosomal replication initiator protein DnaA.